The sequence spans 332 residues: Cytoplasmic phosphatidylinositol transfer protein 1 (332 aa).

Residues Ser119, Ser122, Ser270, and Ser274 each carry the phosphoserine modification. Over residues 272 to 281 the composition is skewed to low complexity; the sequence is PSSAPSTPLS. Residues 272-332 are disordered; sequence PSSAPSTPLS…SEKPCRPKSE (61 aa). Thr278 is subject to Phosphothreonine.

Belongs to the PtdIns transfer protein family. PI transfer class IIB subfamily. Widely expressed in brain, with expression in the gray matters of pre- and postnatal brains. As to expression, weakly expressed in brain and is rather confined to the embryonic stage.

The protein localises to the cytoplasm. The protein resides in the nucleus. The enzyme catalyses a 1,2-diacyl-sn-glycero-3-phospho-(1D-myo-inositol)(in) = a 1,2-diacyl-sn-glycero-3-phospho-(1D-myo-inositol)(out). The catalysed reaction is a 1,2-diacyl-sn-glycero-3-phosphate(in) = a 1,2-diacyl-sn-glycero-3-phosphate(out). Functionally, catalyzes the transfer of phosphatidylinositol (PI) and phosphatidic acid (PA) between membranes. Binds PA derived from the phospholipase D signaling pathway and among the cellular PA species, preferably binds to the C16:0/16:1 and C16:1/18:1 PA species. Its function is as follows. Specifically binds to phosphatidylinositol but not to other phospholipids and may play a role in the phosphoinositide-mediated signaling in the neural development. In Mus musculus (Mouse), this protein is Cytoplasmic phosphatidylinositol transfer protein 1 (Pitpnc1).